A 687-amino-acid chain; its full sequence is MAGFDENVAVMGEWVPRSPSPGTLFSSAIGEEKSSKRVLERELSLNHGQVIGLEEDTSSNHNKDSSQSNVFRGGLSERIAARAGFNAPRLNTENIRTNTDFSIDSNLRSPCLTISSPGLSPATLLESPVFLSNPLAQPSPTTGKFPFLPGVNGNALSSEKAKDEFFDDIGASFSFHPVSRSSSSFFQGTTEMMSVDYGNYNNRSSSHQSAEEVKPGSENIESSNLYGIETDNQNGQNKTSDVTTNTSLETVDHQEEEEEQRRGDSMAGGAPAEDGYNWRKYGQKLVKGSEYPRSYYKCTNPNCQVKKKVERSREGHITEIIYKGAHNHLKPPPNRRSGMQVDGTEQVEQQQQQRDSAATWVSCNNTQQQGGSNENNVEEGSTRFEYGNQSGSIQAQTGGQYESGDPVVVVDASSTFSNDEDEDDRGTHGSVSLGYDGGGGGGGGEGDESESKRRKLEAFAAEMSGSTRAIREPRVVVQTTSDVDILDDGYRWRKYGQKVVKGNPNPRSYYKCTAPGCTVRKHVERASHDLKSVITTYEGKHNHDVPAARNSSHGGGGDSGNGNSGGSAAVSHHYHNGHHSEPPRGRFDRQVTTNNQSPFSRPFSFQPHLGPPSGFSFGLGQTGLVNLSMPGLAYGQGKMPGLPHPYMTQPVGMSEAMMQRGMEPKVEPVSDSGQSVYNQIMSRLPQI.

Positions 197-276 are disordered; that stretch reads YGNYNNRSSS…AGGAPAEDGY (80 aa). 2 stretches are compositionally biased toward polar residues: residues 199 to 208 and 219 to 249; these read NYNNRSSSHQ and NIES…TSLE. A DNA-binding region (WRKY 1) is located at residues 267–331; that stretch reads AGGAPAEDGY…YKGAHNHLKP (65 aa). Zn(2+) is bound by residues Cys298, Cys303, His326, and His328. Disordered regions lie at residues 324-384 and 416-453; these read GAHN…STRF and FSND…ESKR. Over residues 354–379 the composition is skewed to polar residues; sequence RDSAATWVSCNNTQQQGGSNENNVEE. Gly residues predominate over residues 435–444; the sequence is YDGGGGGGGG. Residues 481-546 constitute a DNA-binding region (WRKY 2); it reads SDVDILDDGY…YEGKHNHDVP (66 aa). Residues Cys512, Cys517, His541, and His543 each coordinate Zn(2+). The tract at residues 537–599 is disordered; that stretch reads YEGKHNHDVP…QVTTNNQSPF (63 aa). The segment covering 553–565 has biased composition (gly residues); the sequence is HGGGGDSGNGNSG. The span at 578–589 shows a compositional bias: basic and acidic residues; it reads HHSEPPRGRFDR. Residues 590-599 show a composition bias toward polar residues; it reads QVTTNNQSPF.

It belongs to the WRKY group I family. Low expression in senescent leaves. Expressed in both the unfertilized egg cell and the pollen tube.

The protein resides in the nucleus. Its function is as follows. Transcription factor. Regulates WOX8 and WOX9 expression and basal cell division patterns during early embryogenesis. Interacts specifically with the W box (5'-(T)TGAC[CT]-3'), a frequently occurring elicitor-responsive cis-acting element. Required to repolarize the zygote from a transient symmetric state. This chain is Probable WRKY transcription factor 2, found in Arabidopsis thaliana (Mouse-ear cress).